We begin with the raw amino-acid sequence, 619 residues long: Dihydroxy-acid dehydratase (619 aa).

D80 serves as a coordination point for Mg(2+). C121 contributes to the [2Fe-2S] cluster binding site. D122 and K123 together coordinate Mg(2+). K123 carries the post-translational modification N6-carboxylysine. C196 is a binding site for [2Fe-2S] cluster. E492 is a Mg(2+) binding site. S518 (proton acceptor) is an active-site residue.

Belongs to the IlvD/Edd family. In terms of assembly, homodimer. It depends on [2Fe-2S] cluster as a cofactor. The cofactor is Mg(2+).

It catalyses the reaction (2R)-2,3-dihydroxy-3-methylbutanoate = 3-methyl-2-oxobutanoate + H2O. The enzyme catalyses (2R,3R)-2,3-dihydroxy-3-methylpentanoate = (S)-3-methyl-2-oxopentanoate + H2O. Its pathway is amino-acid biosynthesis; L-isoleucine biosynthesis; L-isoleucine from 2-oxobutanoate: step 3/4. The protein operates within amino-acid biosynthesis; L-valine biosynthesis; L-valine from pyruvate: step 3/4. Functions in the biosynthesis of branched-chain amino acids. Catalyzes the dehydration of (2R,3R)-2,3-dihydroxy-3-methylpentanoate (2,3-dihydroxy-3-methylvalerate) into 2-oxo-3-methylpentanoate (2-oxo-3-methylvalerate) and of (2R)-2,3-dihydroxy-3-methylbutanoate (2,3-dihydroxyisovalerate) into 2-oxo-3-methylbutanoate (2-oxoisovalerate), the penultimate precursor to L-isoleucine and L-valine, respectively. The sequence is that of Dihydroxy-acid dehydratase from Bifidobacterium adolescentis (strain ATCC 15703 / DSM 20083 / NCTC 11814 / E194a).